The sequence spans 858 residues: Leucine--tRNA ligase (858 aa).

The short motif at P42 to H52 is the 'HIGH' region element. Residues K618 to S622 carry the 'KMSKS' region motif. K621 is a binding site for ATP.

This sequence belongs to the class-I aminoacyl-tRNA synthetase family.

It localises to the cytoplasm. It catalyses the reaction tRNA(Leu) + L-leucine + ATP = L-leucyl-tRNA(Leu) + AMP + diphosphate. This is Leucine--tRNA ligase from Aliivibrio fischeri (strain MJ11) (Vibrio fischeri).